The following is a 93-amino-acid chain: HIG1 domain family member 1A, mitochondrial (93 aa).

An HIG1 domain is found at 1-93 (MSTDTGVSLP…YREFWAKPKP (93 aa)). Serine 2 is subject to N-acetylserine. Position 8 is a phosphoserine (serine 8). The next 2 membrane-spanning stretches (helical) occupy residues 26–46 (EAPF…YGLY) and 60–80 (LIHM…VGMG).

In terms of assembly, associates with cytochrome c oxidase (COX, complex IV); proposed complex component. Also associates with respiratory chain supercomplexes.

The protein resides in the mitochondrion membrane. It localises to the mitochondrion inner membrane. Functionally, proposed subunit of cytochrome c oxidase (COX, complex IV), which is the terminal component of the mitochondrial respiratory chain that catalyzes the reduction of oxygen to water. May play a role in the assembly of respiratory supercomplexes. The chain is HIG1 domain family member 1A, mitochondrial (HIGD1A) from Homo sapiens (Human).